Here is a 331-residue protein sequence, read N- to C-terminus: Phenol 2-monooxygenase, oxygenase component DmpL (331 aa).

Belongs to the TmoE/XamoE family. As to quaternary structure, the multicomponent enzyme phenol hydroxylase is formed by DmpL (P1 component), DmpM (P2 component), DmpN (P3 component), DmpO (P4 component) and DmpP (P5 component). The oxygenase component is a dimer composed of three subunits, DmpL, DmpN and DmpO (DmpLNO). DmpL interacts with the auxiliary protein DmpK (P0 component).

It carries out the reaction phenol + NADH + O2 + H(+) = catechol + NAD(+) + H2O. It participates in aromatic compound metabolism; phenol degradation. Requires DmpM for efficient turnover. The activity of DmpLNO oxygenase is inhibited by dithiothreitol (DTT) by a mechanism apparently involving H(2)O(2) generation. Part of a multicomponent enzyme which catalyzes the degradation of phenol and some of its methylated derivatives. DmpL, DmpN and DmpO form the oxygenase component of the complex. Required for growth on phenol and for in vitro phenol hydroxylase activity. In Pseudomonas sp. (strain CF600), this protein is Phenol 2-monooxygenase, oxygenase component DmpL.